A 352-amino-acid polypeptide reads, in one-letter code: Replication-associated protein (352 aa).

The CRESS-DNA virus Rep endonuclease domain maps to 9–117 (QINAKNYFLT…DGDTLVWGEF (109 aa)). Residues 16–19 (FLTY) carry the RCR-1 motif. A divalent metal cation-binding residues include glutamate 50, histidine 58, and histidine 60. An RCR-2 motif is present at residues 58-60 (HLH). The active-site For DNA cleavage activity is the tyrosine 104. Positions 104-107 (YIDK) match the RCR-3 motif. Aspartate 108 serves as a coordination point for a divalent metal cation. Positions 144-154 (KEEALQIIREK) are binding to RBR1. The segment at 157–177 (EKYLFQFHNLNSNLDRIFDKT) is oligomerization. Position 223 to 230 (223 to 230 (GDSRTGKT)) interacts with ATP.

Belongs to the geminiviridae Rep protein family. In terms of assembly, homooligomer. Interacts with the replication enhancer protein (REn). Interacts with host retinoblastoma-related protein 1 (RBR1), and may thereby induce the transcription of host replicative enzymes even if the cell is not dividing anymore. Interacts with host PCNA. Interacts with host SCE1 protein. Interacts with host GRIK1, GRIK2, GRIMP and histone H3. It depends on Mg(2+) as a cofactor. The cofactor is Mn(2+).

Its subcellular location is the host nucleus. Essential for the replication of viral ssDNA. The closed circular ssDNA genome is first converted to a superhelical dsDNA. Rep binds a specific region at the genome origin of replication. It introduces an endonucleolytic nick within the conserved sequence 5'-TAATATTAC-3' in the intergenic region of the genome present in all geminiviruses, thereby initiating the rolling circle replication (RCR). Following cleavage, binds covalently to the 5'-phosphate of DNA as a tyrosyl ester. The cleavage gives rise to a free 3'-OH that serves as a primer for the cellular DNA polymerase. The polymerase synthesizes the (+) strand DNA by rolling circle mechanism. After one round of replication, a Rep-catalyzed nucleotidyl transfer reaction releases a circular single-stranded virus genome, thereby terminating the replication. Displays origin-specific DNA cleavage, nucleotidyl transferase, ATPase and helicase activities. This is Replication-associated protein from Solanum lycopersicum (Tomato).